The chain runs to 269 residues: Hydroxyethylthiazole kinase (269 aa).

Met-43 is a binding site for substrate. Positions 119 and 165 each coordinate ATP. Ala-192 contacts substrate.

This sequence belongs to the Thz kinase family. It depends on Mg(2+) as a cofactor.

The catalysed reaction is 5-(2-hydroxyethyl)-4-methylthiazole + ATP = 4-methyl-5-(2-phosphooxyethyl)-thiazole + ADP + H(+). It functions in the pathway cofactor biosynthesis; thiamine diphosphate biosynthesis; 4-methyl-5-(2-phosphoethyl)-thiazole from 5-(2-hydroxyethyl)-4-methylthiazole: step 1/1. Functionally, catalyzes the phosphorylation of the hydroxyl group of 4-methyl-5-beta-hydroxyethylthiazole (THZ). This chain is Hydroxyethylthiazole kinase, found in Glaesserella parasuis serovar 5 (strain SH0165) (Haemophilus parasuis).